A 648-amino-acid chain; its full sequence is MTEPLIRVRGVSRAFPAGDEMVRVLKDVDLDIEAGEMMAIIGASGSGKSTLMNILGCLDRPTTGSYWIEGRETSKMAVDELAALRRERFGFIFQRYHLLGDLSAASNVEVPAIYAGRSRSDRHKRAISLLTRLGLAERTGNIPSKLSGGQQQRVSIARALMNGGEIILADEPTGALDTHSGAEVMKILRELHAEGHTIILVTHDKKIAEHADRVVEISDGVIISDERNVSRSTTARPIREHGPSAGWRGAIDRMTEALRMAGAAIWAHKMRSLLTMLGIIIGIASVAAISALGAGSQQQILSSISSLGTNTIEVRAGKGFGDLEAGKIRTLVPADAEALVNQPYVDSVTPTVTTSVTVKRAAVAVNASVTGVGADFFRVRGLELAHGQLFDAQDVIAYSQNVVIDASAARDLFPDRVNPVGQVILLGTMPARVVGVTKRENSFGPAVDTLTVYAPYTTVMGRMLGRPNVDGITVRIRDDVDPGNVEAAVTRLIERRHGAKDFFLTNSATIRETIETTTQTLTLLISSVAVISLIVGGIGVMNIMLVSVTERTKEIGVRVAVGARRSDILSQFLIEAVMVCLVGGLMGIMLALGISALFNLLSPDFKMIFSPGSIIVAFACSTLIGIVFGFLPARNAAKLDPIEALARD.

In terms of domain architecture, ABC transporter spans 6 to 251 (IRVRGVSRAF…GPSAGWRGAI (246 aa)). 42–49 (GASGSGKS) is a binding site for ATP. Helical transmembrane passes span 273 to 293 (LLTMLGIIIGIASVAAISALG), 528 to 548 (VAVISLIVGGIGVMNIMLVSV), 572 to 592 (FLIEAVMVCLVGGLMGIMLAL), and 613 to 633 (SIIVAFACSTLIGIVFGFLPA).

This sequence belongs to the ABC transporter superfamily. Macrolide exporter (TC 3.A.1.122) family. In terms of assembly, homodimer.

The protein resides in the cell inner membrane. Functionally, non-canonical ABC transporter that contains transmembrane domains (TMD), which form a pore in the inner membrane, and an ATP-binding domain (NBD), which is responsible for energy generation. Confers resistance against macrolides. The chain is Macrolide export ATP-binding/permease protein MacB from Agrobacterium fabrum (strain C58 / ATCC 33970) (Agrobacterium tumefaciens (strain C58)).